We begin with the raw amino-acid sequence, 353 residues long: Sulfate/thiosulfate import ATP-binding protein CysA (353 aa).

The region spanning 3-237 is the ABC transporter domain; the sequence is IQVKNIEKHF…PATPFVFDFL (235 aa). Residue 35-42 participates in ATP binding; that stretch reads GPSGCGKT.

Belongs to the ABC transporter superfamily. Sulfate/tungstate importer (TC 3.A.1.6) family. The complex is composed of two ATP-binding proteins (CysA), two transmembrane proteins (CysT and CysW) and a solute-binding protein (CysP).

It localises to the cell inner membrane. It carries out the reaction sulfate(out) + ATP + H2O = sulfate(in) + ADP + phosphate + H(+). It catalyses the reaction thiosulfate(out) + ATP + H2O = thiosulfate(in) + ADP + phosphate + H(+). Functionally, part of the ABC transporter complex CysAWTP involved in sulfate/thiosulfate import. Responsible for energy coupling to the transport system. The chain is Sulfate/thiosulfate import ATP-binding protein CysA from Acinetobacter baylyi (strain ATCC 33305 / BD413 / ADP1).